The primary structure comprises 91 residues: C-C motif chemokine 5 (91 aa).

Residues 1 to 23 form the signal peptide; sequence MKISAAVLTVVLMAASLCAPASA. 2 disulfides stabilise this stretch: cysteine 33–cysteine 57 and cysteine 34–cysteine 73.

Belongs to the intercrine beta (chemokine CC) family.

It localises to the secreted. Chemoattractant for blood monocytes, memory T-helper cells and eosinophils. Causes the release of histamine from basophils and activates eosinophils. May activate several chemokine receptors including CCR1, CCR3, CCR4 and CCR5. May also be an agonist of the G protein-coupled receptor GPR75. Together with GPR75, may play a role in neuron survival through activation of a downstream signaling pathway involving the PI3, Akt and MAP kinases. By activating GPR75 may also play a role in insulin secretion by islet cells. This chain is C-C motif chemokine 5 (CCL5), found in Sigmodon hispidus (Hispid cotton rat).